A 1138-amino-acid polypeptide reads, in one-letter code: uncharacterized protein (1138 aa).

2 disordered regions span residues Glu985 to Glu1015 and Leu1094 to Leu1138. Residues Asp1110–Leu1138 are compositionally biased toward acidic residues.

This is an uncharacterized protein from Ostreid herpesvirus 1 (isolate France) (OsHV-1).